Consider the following 357-residue polypeptide: Cinnamyl alcohol dehydrogenase 1 (357 aa).

Position 47 (C47) interacts with Zn(2+). T49 lines the NADP(+) pocket. Residues H69, E70, C100, C103, C106, C114, and C163 each coordinate Zn(2+). NADP(+)-binding positions include T167, 188 to 193, 211 to 216, T251, G275, and 298 to 300; these read GLGGVG, SSSDKK, and SFI.

Belongs to the zinc-containing alcohol dehydrogenase family. In terms of assembly, homodimer. Zn(2+) is required as a cofactor. In terms of tissue distribution, expressed in leaves, mainly in peltate glands.

The enzyme catalyses (E)-cinnamyl alcohol + NADP(+) = (E)-cinnamaldehyde + NADPH + H(+). It carries out the reaction (E)-coniferol + NADP(+) = (E)-coniferaldehyde + NADPH + H(+). It catalyses the reaction (E)-sinapyl alcohol + NADP(+) = (E)-sinapaldehyde + NADPH + H(+). The catalysed reaction is (E)-4-coumaroyl alcohol + NADP(+) = (E)-4-coumaraldehyde + NADPH + H(+). The enzyme catalyses (E)-caffeyl alcohol + NADP(+) = (E)-caffeyl aldehyde + NADPH + H(+). Its pathway is aromatic compound metabolism; phenylpropanoid biosynthesis. With respect to regulation, 60% inhibition by 5 mM Ca(+), Mg(+) or Cu(+). Involved in the production of citral, a mixture of geranial and neral with a strong lemony scent. Reversibly oxidizes geraniol to produce geranial at half the efficiency compared with its activity with cinnamyl alcohol. Does not use nerol and neral as substrates. In Ocimum basilicum (Sweet basil), this protein is Cinnamyl alcohol dehydrogenase 1 (CAD1).